The chain runs to 279 residues: Acetyl-coenzyme A carboxylase carboxyl transferase subunit beta (279 aa).

Residues 27 to 279 form the CoA carboxyltransferase N-terminal domain; it reads LFLACPYCGT…IVKLHHRTEI (253 aa). 4 residues coordinate Zn(2+): C31, C34, C49, and C52. The segment at 31–52 adopts a C4-type zinc-finger fold; that stretch reads CPYCGTQMYNKQLGDYRVCAKC.

It belongs to the AccD/PCCB family. As to quaternary structure, acetyl-CoA carboxylase is a heterohexamer composed of biotin carboxyl carrier protein (AccB), biotin carboxylase (AccC) and two subunits each of ACCase subunit alpha (AccA) and ACCase subunit beta (AccD). The cofactor is Zn(2+).

It localises to the cytoplasm. It carries out the reaction N(6)-carboxybiotinyl-L-lysyl-[protein] + acetyl-CoA = N(6)-biotinyl-L-lysyl-[protein] + malonyl-CoA. It participates in lipid metabolism; malonyl-CoA biosynthesis; malonyl-CoA from acetyl-CoA: step 1/1. Its function is as follows. Component of the acetyl coenzyme A carboxylase (ACC) complex. Biotin carboxylase (BC) catalyzes the carboxylation of biotin on its carrier protein (BCCP) and then the CO(2) group is transferred by the transcarboxylase to acetyl-CoA to form malonyl-CoA. In Leuconostoc citreum (strain KM20), this protein is Acetyl-coenzyme A carboxylase carboxyl transferase subunit beta.